Reading from the N-terminus, the 282-residue chain is DegV domain-containing protein M6_Spy0690 (282 aa).

The 278-residue stretch at 3–280 folds into the DegV domain; that stretch reads LAVITDSTAT…EGAIAFGVTP (278 aa). Threonine 61 and serine 94 together coordinate hexadecanoate.

Its function is as follows. May bind long-chain fatty acids, such as palmitate, and may play a role in lipid transport or fatty acid metabolism. The protein is DegV domain-containing protein M6_Spy0690 of Streptococcus pyogenes serotype M6 (strain ATCC BAA-946 / MGAS10394).